A 299-amino-acid polypeptide reads, in one-letter code: Non-structural protein NS-S (299 aa).

The interval 66-69 is involved in inclusion bodies formation; it reads PNNP. The interval 148 to 220 is interaction with host TNIP2; the sequence is FEGDMVIDSC…KPLLDSLYFA (73 aa).

This sequence belongs to the Bandavirus NS-S protein family. Interacts with host TBK1; this interaction antagonizes TBK1 phosphorylation and inhibits TBK1-IRF3 interaction. Interacts with host STAT2; this interaction blocks the nuclear translocation and activation of host STAT2. Interacts with host TNIP2.

It is found in the host cytoplasm. Plays a role in the inhibition of host RLR-induced interferon-beta activation by inhibiting the phosphorylation of TANK-binding kinase 1/TBK1, thereby blocking IRF3 activation and preventing the establishment of an antiviral state. Also blocks IFN-triggered nuclear translocation and activation of host STAT2. The chain is Non-structural protein NS-S (NSS) from Alces americanus (American moose).